Reading from the N-terminus, the 392-residue chain is Galactokinase (392 aa).

Substrate is bound at residue 40–43 (EHID). ATP contacts are provided by residues serine 74 and 128-134 (GSGLSSS). Serine 134 and glutamate 167 together coordinate Mg(2+). Aspartate 179 (proton acceptor) is an active-site residue. Tyrosine 229 contributes to the substrate binding site.

This sequence belongs to the GHMP kinase family. GalK subfamily.

It is found in the cytoplasm. The enzyme catalyses alpha-D-galactose + ATP = alpha-D-galactose 1-phosphate + ADP + H(+). It participates in carbohydrate metabolism; galactose metabolism. Catalyzes the transfer of the gamma-phosphate of ATP to D-galactose to form alpha-D-galactose-1-phosphate (Gal-1-P). This chain is Galactokinase, found in Clostridium tetani (strain Massachusetts / E88).